We begin with the raw amino-acid sequence, 449 residues long: Tryptophan synthase beta chain 2 (449 aa).

Lysine 116 bears the N6-(pyridoxal phosphate)lysine mark.

The protein belongs to the TrpB family. Tetramer of two alpha and two beta chains. It depends on pyridoxal 5'-phosphate as a cofactor.

The catalysed reaction is (1S,2R)-1-C-(indol-3-yl)glycerol 3-phosphate + L-serine = D-glyceraldehyde 3-phosphate + L-tryptophan + H2O. Its pathway is amino-acid biosynthesis; L-tryptophan biosynthesis; L-tryptophan from chorismate: step 5/5. Functionally, the beta subunit is responsible for the synthesis of L-tryptophan from indole and L-serine. This is Tryptophan synthase beta chain 2 (trpB2) from Aeropyrum pernix (strain ATCC 700893 / DSM 11879 / JCM 9820 / NBRC 100138 / K1).